The sequence spans 183 residues: ATP synthase subunit delta (183 aa).

Belongs to the ATPase delta chain family. As to quaternary structure, F-type ATPases have 2 components, F(1) - the catalytic core - and F(0) - the membrane proton channel. F(1) has five subunits: alpha(3), beta(3), gamma(1), delta(1), epsilon(1). F(0) has three main subunits: a(1), b(2) and c(10-14). The alpha and beta chains form an alternating ring which encloses part of the gamma chain. F(1) is attached to F(0) by a central stalk formed by the gamma and epsilon chains, while a peripheral stalk is formed by the delta and b chains.

The protein localises to the cell inner membrane. Its function is as follows. F(1)F(0) ATP synthase produces ATP from ADP in the presence of a proton or sodium gradient. F-type ATPases consist of two structural domains, F(1) containing the extramembraneous catalytic core and F(0) containing the membrane proton channel, linked together by a central stalk and a peripheral stalk. During catalysis, ATP synthesis in the catalytic domain of F(1) is coupled via a rotary mechanism of the central stalk subunits to proton translocation. This protein is part of the stalk that links CF(0) to CF(1). It either transmits conformational changes from CF(0) to CF(1) or is implicated in proton conduction. The chain is ATP synthase subunit delta from Nitratidesulfovibrio vulgaris (strain DSM 19637 / Miyazaki F) (Desulfovibrio vulgaris).